Consider the following 315-residue polypeptide: Methionyl-tRNA formyltransferase (315 aa).

113–116 is a (6S)-5,6,7,8-tetrahydrofolate binding site; that stretch reads SLLP.

It belongs to the Fmt family.

The catalysed reaction is L-methionyl-tRNA(fMet) + (6R)-10-formyltetrahydrofolate = N-formyl-L-methionyl-tRNA(fMet) + (6S)-5,6,7,8-tetrahydrofolate + H(+). Attaches a formyl group to the free amino group of methionyl-tRNA(fMet). The formyl group appears to play a dual role in the initiator identity of N-formylmethionyl-tRNA by promoting its recognition by IF2 and preventing the misappropriation of this tRNA by the elongation apparatus. The polypeptide is Methionyl-tRNA formyltransferase (Escherichia coli O127:H6 (strain E2348/69 / EPEC)).